Here is a 1169-residue protein sequence, read N- to C-terminus: Chromosome partition protein Smc (1169 aa).

32 to 39 is an ATP binding site; sequence PNGCGKSN. Coiled coils occupy residues 170–507 and 659–1030; these read ISKY…ALGE and REQQ…FQSL.

This sequence belongs to the SMC family. Homodimer.

The protein localises to the cytoplasm. Functionally, required for chromosome condensation and partitioning. The polypeptide is Chromosome partition protein Smc (Coxiella burnetii (strain RSA 493 / Nine Mile phase I)).